Here is a 131-residue protein sequence, read N- to C-terminus: Large ribosomal subunit protein bL17 (131 aa).

This sequence belongs to the bacterial ribosomal protein bL17 family. In terms of assembly, part of the 50S ribosomal subunit. Contacts protein L32.

This is Large ribosomal subunit protein bL17 from Janthinobacterium sp. (strain Marseille) (Minibacterium massiliensis).